Reading from the N-terminus, the 1610-residue chain is Protein TASOR (1610 aa).

The segment at 1–96 (MATAAETEAP…PERPFRRSFQ (96 aa)) is disordered. Position 2 is an N-acetylalanine (A2). The span at 41-51 (NGGGDGGGGAG) shows a compositional bias: gly residues. Residues 52 to 61 (PEETAAAEAA) are compositionally biased toward low complexity. Position 339 is a phosphoserine (S339). Residue K581 forms a Glycyl lysine isopeptide (Lys-Gly) (interchain with G-Cter in SUMO2) linkage. A phosphoserine mark is found at S628, S631, and S668. 2 disordered regions span residues 631–671 (SDYE…SLDY) and 687–710 (KKNVGGDPDPEDTKSKNVLKRKLE). Composition is skewed to basic and acidic residues over residues 652 to 671 (NSRDETTEPEQQKSSHSLDY) and 697 to 710 (EDTKSKNVLKRKLE). Position 793 is a phosphoserine (S793). Residues K816 and K825 each participate in a glycyl lysine isopeptide (Lys-Gly) (interchain with G-Cter in SUMO2) cross-link. The residue at position 836 (S836) is a Phosphoserine. Residue K866 forms a Glycyl lysine isopeptide (Lys-Gly) (interchain with G-Cter in SUMO2) linkage. The tract at residues 915–941 (TGGNAGSPEDQHGKHGEKQTPDTLKGT) is disordered. Phosphoserine is present on residues S921 and K928. A compositionally biased stretch (basic and acidic residues) spans 923 to 934 (EDQHGKHGEKQT). At T1004 the chain carries Phosphothreonine. 2 positions are modified to phosphoserine: S1059 and S1508.

Belongs to the TASOR family. Component of the HUSH complex; at least composed of TASOR, PPHLN1 and MPHOSPH8. Interacts with MORC2; the interaction associateS MORC2 with the HUSH complex which recruits MORC2 to heterochromatic loci. Interacts with ZNF638; leading to recruitment of the HUSH complex to unintegrated retroviral DNA. Interacts with INPP5A, EML1, SV1L, GPSM2, ITGB3BP, CNTN1, ETFA, PSMD8, S100A10, MPHOSPH8, TMEM100, ALB, PARPBP, HCFC2, NCBP1 and SETDB1. Present in skin, brain and testis (at protein level). Ubiquitously expressed at low levels in the majority of the organs, expressed at higher levels in kidneys, spleen, thymus, seminal vesicles, uterus, and ovaries and its expression is almost six times higher in male tissues than in females. Highly expressed in seminiferous tubules with a strong signal in Sertoli cells, spermatogonia, and spermatocytes.

It is found in the nucleus. The protein localises to the chromosome. Functionally, component of the HUSH complex, a multiprotein complex that mediates epigenetic repression. The HUSH complex is recruited to genomic loci rich in H3K9me3 and is required to maintain transcriptional silencing by promoting recruitment of SETDB1, a histone methyltransferase that mediates further deposition of H3K9me3, as well as MORC2. Also represses L1 retrotransposons in collaboration with MORC2 and, probably, SETDB1, the silencing is dependent of repressive epigenetic modifications, such as H3K9me3 mark. Silencing events often occur within introns of transcriptionally active genes, and lead to the down-regulation of host gene expression. The HUSH complex is also involved in the silencing of unintegrated retroviral DNA by being recruited by ZNF638: some part of the retroviral DNA formed immediately after infection remains unintegrated in the host genome and is transcriptionally repressed. Plays a crucial role in early embryonic development. Involved in the organization of spindle poles and spindle apparatus assembly during zygotic division. Plays an important role in maintaining epiblast fitness or potency. In Mus musculus (Mouse), this protein is Protein TASOR.